The following is a 366-amino-acid chain: uncharacterized protein (366 aa).

The active-site Proton donor is Glu139. Residue Glu249 is the Nucleophile of the active site.

This sequence belongs to the glycosyl hydrolase 53 family.

This is an uncharacterized protein from Niallia circulans (Bacillus circulans).